A 1086-amino-acid polypeptide reads, in one-letter code: Formin-like protein 2 (1086 aa).

G2 carries the N-myristoyl glycine lipid modification. The 447-residue stretch at 23 to 469 (LPMPEPGELE…EAIQRQSTLE (447 aa)) folds into the GBD/FH3 domain. S188 is modified (phosphoserine). Residues 513–597 (SVGPTMGAAS…APPLPSAPPL (85 aa)) are disordered. The segment covering 525–537 (PLPPPPPPLPPSS) has biased composition (pro residues). The segment covering 538 to 547 (DTPETVQNGP) has biased composition (polar residues). Composition is skewed to pro residues over residues 548–576 (VTPP…PLPG) and 583–597 (PAPP…APPL). The FH2 domain occupies 616–1007 (IKKPIKTKFR…LMEKLLEQEA (392 aa)). In terms of domain architecture, DAD spans 1040–1079 (NRHVYEGKDGAIEDIITVLKTVPFTARTAKRGSRFFCEPV).

This sequence belongs to the formin homology family.

It is found in the cytoplasm. Plays a role in the regulation of cell morphology and cytoskeletal organization. Required in the cortical actin filament dynamics. In Homo sapiens (Human), this protein is Formin-like protein 2.